Consider the following 113-residue polypeptide: U11-theraphotoxin-Hhn1f (113 aa).

The first 21 residues, 1-21 (MNTVRVTFLLVFVLAVSLGQA), serve as a signal peptide directing secretion. The propeptide occupies 22-74 (DKDENRMEMQEKTEQGKSYLDFAENLLLQKLEELEAKLLEEDSEESRNSRQKR). The segment at 61–83 (EEDSEESRNSRQKRCIGEGVPCD) is disordered. Disulfide bonds link cysteine 75–cysteine 90, cysteine 82–cysteine 95, and cysteine 89–cysteine 110.

The protein belongs to the neurotoxin 14 (magi-1) family. 01 (HNTX-16) subfamily. Expressed by the venom gland.

Its subcellular location is the secreted. Its function is as follows. Probable ion channel inhibitor. This Cyriopagopus hainanus (Chinese bird spider) protein is U11-theraphotoxin-Hhn1f.